We begin with the raw amino-acid sequence, 850 residues long: Bifunctional levopimaradiene synthase, chloroplastic (850 aa).

A chloroplast-targeting transit peptide spans 1-52; the sequence is MALPSSSLSSQIHTGATTQCIPHFHGSLNAGTSAGKRRSLYLRWGKGPSKIV. Residue lysine 250 coordinates substrate. Aspartate 383 and aspartate 385 together coordinate Mg(2+). The DXDD motif signature appears at 383–386; it reads DIDD. Lysine 470 serves as a coordination point for substrate. Mg(2+)-binding residues include aspartate 602, aspartate 606, asparagine 746, threonine 750, and glutamate 754. The short motif at 602-606 is the DDXXD motif element; sequence DDLYD.

This sequence belongs to the terpene synthase family. Tpsd subfamily. Mg(2+) is required as a cofactor. In terms of tissue distribution, expressed in young tissues such as flushing buds and green bark tissues. Lower levels in mature needles and bark.

It is found in the plastid. The protein resides in the chloroplast. The catalysed reaction is (2E,6E,10E)-geranylgeranyl diphosphate = (+)-copalyl diphosphate. It carries out the reaction (+)-copalyl diphosphate = abieta-8(14),12-diene + diphosphate. It catalyses the reaction (+)-copalyl diphosphate = neoabietadiene + diphosphate. The protein operates within terpene metabolism; oleoresin biosynthesis. Involved in defensive oleoresin formation in conifers in response to insect attack or other injury. Involved in diterpene (C20) olefins biosynthesis. Bifunctional enzyme that catalyzes two sequential cyclizations of geranylgeranyl diphosphate (GGPP) to levopimaradiene. Levopimaradiene is the major products of the enzyme followed by abietadiene, neoabietadiene and palustradiene. No activity with geranyl diphosphate (GPP) or farnesyl diphosphate (FPP) as substrate. The polypeptide is Bifunctional levopimaradiene synthase, chloroplastic (LPS) (Pinus taeda (Loblolly pine)).